Consider the following 283-residue polypeptide: MNWTGLYTLLSGVNRHSTAIGRVWLSVIFIFRIMVLVVAAESVWGDEKSSFICNTLQPGCNSVCYDHFFPISHVRLWSLQLILVSTPALLVAMHVAHQQHIEKKMLRLEGHGDPIHLEEVKRHKVHISGTLWWTYVISVVFRLLFEAAFMYVFYLLYPGYAMVRLVKCDAYPCPNTVDCFVSRPTEKTVFTVFMLAASGICIILNVAEVVYLIVRACARRAQRRSNPPSRKGSGFGHRLSPEYKQNEINKLLSEQDGSLKDILRRSPGTGAGLAEKSDRCSAC.

The Cytoplasmic segment spans residues 1–22; sequence MNWTGLYTLLSGVNRHSTAIGR. Residues 23-45 traverse the membrane as a helical segment; it reads VWLSVIFIFRIMVLVVAAESVWG. Over 46 to 75 the chain is Extracellular; the sequence is DEKSSFICNTLQPGCNSVCYDHFFPISHVR. A helical transmembrane segment spans residues 76 to 95; the sequence is LWSLQLILVSTPALLVAMHV. The Cytoplasmic portion of the chain corresponds to 96–130; sequence AHQQHIEKKMLRLEGHGDPIHLEEVKRHKVHISGT. A helical membrane pass occupies residues 131–153; the sequence is LWWTYVISVVFRLLFEAAFMYVF. Over 154 to 191 the chain is Extracellular; the sequence is YLLYPGYAMVRLVKCDAYPCPNTVDCFVSRPTEKTVFT. A helical membrane pass occupies residues 192-214; it reads VFMLAASGICIILNVAEVVYLIV. Topologically, residues 215–283 are cytoplasmic; sequence RACARRAQRR…AEKSDRCSAC (69 aa). Phosphoserine is present on residues Ser-233, Ser-258, Ser-266, and Ser-277.

It belongs to the connexin family. Beta-type (group I) subfamily. A connexon is composed of a hexamer of connexins. Interacts with CNST.

Its subcellular location is the cell membrane. The protein resides in the cell junction. The protein localises to the gap junction. Functionally, one gap junction consists of a cluster of closely packed pairs of transmembrane channels, the connexons, through which materials of low MW diffuse from one cell to a neighboring cell. This chain is Gap junction beta-1 protein (GJB1), found in Equus caballus (Horse).